Here is a 308-residue protein sequence, read N- to C-terminus: Acetylglutamate kinase (308 aa).

Residues 73-74 (GG), arginine 95, and asparagine 194 contribute to the substrate site.

Belongs to the acetylglutamate kinase family. ArgB subfamily.

It is found in the cytoplasm. It catalyses the reaction N-acetyl-L-glutamate + ATP = N-acetyl-L-glutamyl 5-phosphate + ADP. It functions in the pathway amino-acid biosynthesis; L-arginine biosynthesis; N(2)-acetyl-L-ornithine from L-glutamate: step 2/4. In terms of biological role, catalyzes the ATP-dependent phosphorylation of N-acetyl-L-glutamate. The chain is Acetylglutamate kinase from Rhodococcus jostii (strain RHA1).